A 257-amino-acid chain; its full sequence is Ribonuclease PH (257 aa).

Phosphate is bound by residues Arg-87 and 125-127; that span reads GTR.

This sequence belongs to the RNase PH family. As to quaternary structure, homohexameric ring arranged as a trimer of dimers.

It carries out the reaction tRNA(n+1) + phosphate = tRNA(n) + a ribonucleoside 5'-diphosphate. Phosphorolytic 3'-5' exoribonuclease that plays an important role in tRNA 3'-end maturation. Removes nucleotide residues following the 3'-CCA terminus of tRNAs; can also add nucleotides to the ends of RNA molecules by using nucleoside diphosphates as substrates, but this may not be physiologically important. Probably plays a role in initiation of 16S rRNA degradation (leading to ribosome degradation) during starvation. The protein is Ribonuclease PH of Geobacillus kaustophilus (strain HTA426).